A 250-amino-acid polypeptide reads, in one-letter code: LexA repressor (250 aa).

The span at 1–21 (MTSQERGTRRGDTRGNVRDFP) shows a compositional bias: basic and acidic residues. A disordered region spans residues 1–33 (MTSQERGTRRGDTRGNVRDFPDSPADASGLTQR). A DNA-binding region (H-T-H motif) is located at residues 54–74 (VREIGEAVGLTSTSSVAHQLK). Active-site for autocatalytic cleavage activity residues include Ser174 and Lys211.

Belongs to the peptidase S24 family. Homodimer.

It carries out the reaction Hydrolysis of Ala-|-Gly bond in repressor LexA.. Functionally, represses a number of genes involved in the response to DNA damage (SOS response), including recA and lexA. In the presence of single-stranded DNA, RecA interacts with LexA causing an autocatalytic cleavage which disrupts the DNA-binding part of LexA, leading to derepression of the SOS regulon and eventually DNA repair. This chain is LexA repressor, found in Parafrankia sp. (strain EAN1pec).